The sequence spans 583 residues: Scarecrow-like protein 30 (583 aa).

2 disordered regions span residues 107–154 and 182–205; these read GDLE…RKSK and EATEKKTRHVKGSSNRYKQQKSDQ. A compositionally biased stretch (polar residues) spans 115–124; that stretch reads GNFSSITSLH. The segment covering 131–140 has biased composition (basic and acidic residues); that stretch reads ESTRRYRHRD. The GRAS domain occupies 200–579; sequence QQKSDQPVDM…RVLYAVSCWK (380 aa). A leucine repeat I (LRI) region spans residues 207-266; sequence VDMRNLLMQCAQAVASFDQRRAFEKLKEIREHSSRHGDATQRLGYHFAEALEARITGTMT. Residues 285–350 form a VHIID region; that stretch reads YKGFVQACPT…IGPPLLRVTG (66 aa). A VHIID motif is present at residues 316–320; it reads LHIID. Residues 366–398 form a leucine repeat II (LRII) region; the sequence is ETGRRLKRFCDKFNVPFEYSFIAKNWENITLDD. The PFYRE stretch occupies residues 407 to 501; it reads TVVNCILRLQ…RELIIRDAMS (95 aa). An SAW region spans residues 504 to 579; the sequence is ACEGSERFAR…RVLYAVSCWK (76 aa).

Belongs to the GRAS family. In terms of assembly, interacts with SNRNP35 and CYP95. Expressed in seedlings, leaves, sepals, stamen and pistil, and in the quiescent center of root meristem.

Its subcellular location is the nucleus. Its function is as follows. Probable transcription factor involved in plant development. The polypeptide is Scarecrow-like protein 30 (SCL30) (Arabidopsis thaliana (Mouse-ear cress)).